The chain runs to 234 residues: Phosphoglycolate phosphatase (234 aa).

Asp-9 (nucleophile) is an active-site residue. The Mg(2+) site is built by Asp-9 and Asp-11. Lys-162 is a binding site for substrate. Mg(2+)-binding residues include Asp-185 and Asp-189.

It belongs to the archaeal SPP-like hydrolase family. It depends on Mg(2+) as a cofactor.

It catalyses the reaction 2-phosphoglycolate + H2O = glycolate + phosphate. In terms of biological role, catalyzes the dephosphorylation of 2-phosphoglycolate. This chain is Phosphoglycolate phosphatase, found in Methanobrevibacter smithii (strain ATCC 35061 / DSM 861 / OCM 144 / PS).